Consider the following 669-residue polypeptide: DNA ligase (669 aa).

NAD(+) contacts are provided by residues 32–36, 81–82, and glutamate 113; these read DAEYD and SL. Residue lysine 115 is the N6-AMP-lysine intermediate of the active site. 4 residues coordinate NAD(+): arginine 136, glutamate 173, lysine 290, and lysine 314. Residues cysteine 408, cysteine 411, cysteine 426, and cysteine 432 each coordinate Zn(2+). The BRCT domain maps to 592–669; sequence AVDSALAGKI…DEQALIEFLK (78 aa).

This sequence belongs to the NAD-dependent DNA ligase family. LigA subfamily. Mg(2+) serves as cofactor. The cofactor is Mn(2+).

It carries out the reaction NAD(+) + (deoxyribonucleotide)n-3'-hydroxyl + 5'-phospho-(deoxyribonucleotide)m = (deoxyribonucleotide)n+m + AMP + beta-nicotinamide D-nucleotide.. DNA ligase that catalyzes the formation of phosphodiester linkages between 5'-phosphoryl and 3'-hydroxyl groups in double-stranded DNA using NAD as a coenzyme and as the energy source for the reaction. It is essential for DNA replication and repair of damaged DNA. The polypeptide is DNA ligase (Vibrio cholerae serotype O1 (strain ATCC 39315 / El Tor Inaba N16961)).